Reading from the N-terminus, the 370-residue chain is Uroporphyrinogen decarboxylase (370 aa).

Residues 29-33, D79, Y155, S210, and H342 each bind substrate; that span reads RQAGR.

Belongs to the uroporphyrinogen decarboxylase family. As to quaternary structure, homodimer.

The protein localises to the cytoplasm. The catalysed reaction is uroporphyrinogen III + 4 H(+) = coproporphyrinogen III + 4 CO2. It functions in the pathway porphyrin-containing compound metabolism; protoporphyrin-IX biosynthesis; coproporphyrinogen-III from 5-aminolevulinate: step 4/4. Its function is as follows. Catalyzes the decarboxylation of four acetate groups of uroporphyrinogen-III to yield coproporphyrinogen-III. The polypeptide is Uroporphyrinogen decarboxylase (Acidovorax ebreus (strain TPSY) (Diaphorobacter sp. (strain TPSY))).